Reading from the N-terminus, the 240-residue chain is 4-hydroxy-tetrahydrodipicolinate reductase (240 aa).

NAD(+)-binding positions include 79 to 81 (ATT) and 103 to 106 (SANM). Histidine 135 functions as the Proton donor/acceptor in the catalytic mechanism. A (S)-2,3,4,5-tetrahydrodipicolinate-binding site is contributed by histidine 136. Lysine 139 serves as the catalytic Proton donor. Residue 145 to 146 (GT) participates in (S)-2,3,4,5-tetrahydrodipicolinate binding.

It belongs to the DapB family.

The protein resides in the cytoplasm. It carries out the reaction (S)-2,3,4,5-tetrahydrodipicolinate + NAD(+) + H2O = (2S,4S)-4-hydroxy-2,3,4,5-tetrahydrodipicolinate + NADH + H(+). The enzyme catalyses (S)-2,3,4,5-tetrahydrodipicolinate + NADP(+) + H2O = (2S,4S)-4-hydroxy-2,3,4,5-tetrahydrodipicolinate + NADPH + H(+). It functions in the pathway amino-acid biosynthesis; L-lysine biosynthesis via DAP pathway; (S)-tetrahydrodipicolinate from L-aspartate: step 4/4. Catalyzes the conversion of 4-hydroxy-tetrahydrodipicolinate (HTPA) to tetrahydrodipicolinate. The chain is 4-hydroxy-tetrahydrodipicolinate reductase from Staphylococcus aureus (strain JH1).